Consider the following 247-residue polypeptide: 6-carboxyhexanoate--CoA ligase (247 aa).

Belongs to the BioW family. In terms of assembly, homodimer. It depends on Mg(2+) as a cofactor.

The enzyme catalyses heptanedioate + ATP + CoA = 6-carboxyhexanoyl-CoA + AMP + diphosphate. It participates in metabolic intermediate metabolism; pimeloyl-CoA biosynthesis; pimeloyl-CoA from pimelate: step 1/1. Catalyzes the transformation of pimelate into pimeloyl-CoA with concomitant hydrolysis of ATP to AMP. The polypeptide is 6-carboxyhexanoate--CoA ligase (Corynebacterium diphtheriae (strain ATCC 700971 / NCTC 13129 / Biotype gravis)).